Here is a 162-residue protein sequence, read N- to C-terminus: Putative ankyrin repeat protein RBE_0151 (162 aa).

ANK repeat units lie at residues 49–77, 81–110, and 114–145; these read EKWT…NINI, KGRT…VVAP, and YGWS…EHDK.

The protein is Putative ankyrin repeat protein RBE_0151 of Rickettsia bellii (strain RML369-C).